We begin with the raw amino-acid sequence, 279 residues long: Phosphatidylglycerol--prolipoprotein diacylglyceryl transferase (279 aa).

The next 3 membrane-spanning stretches (helical) occupy residues 18 to 38, 55 to 75, and 89 to 109; these read LSVR…YFVA, IIFY…VIFQ, and IWHG…AGVI. Arg-137 is a binding site for a 1,2-diacyl-sn-glycero-3-phospho-(1'-sn-glycerol). Transmembrane regions (helical) follow at residues 203-223 and 235-255; these read LGET…FIEG and IRVA…LIVY.

This sequence belongs to the Lgt family.

The protein localises to the cell membrane. The enzyme catalyses L-cysteinyl-[prolipoprotein] + a 1,2-diacyl-sn-glycero-3-phospho-(1'-sn-glycerol) = an S-1,2-diacyl-sn-glyceryl-L-cysteinyl-[prolipoprotein] + sn-glycerol 1-phosphate + H(+). Its pathway is protein modification; lipoprotein biosynthesis (diacylglyceryl transfer). In terms of biological role, catalyzes the transfer of the diacylglyceryl group from phosphatidylglycerol to the sulfhydryl group of the N-terminal cysteine of a prolipoprotein, the first step in the formation of mature lipoproteins. In Staphylococcus aureus (strain Mu3 / ATCC 700698), this protein is Phosphatidylglycerol--prolipoprotein diacylglyceryl transferase.